The chain runs to 269 residues: Putative hydro-lyase RL2444 (269 aa).

Belongs to the D-glutamate cyclase family.

The protein is Putative hydro-lyase RL2444 of Rhizobium johnstonii (strain DSM 114642 / LMG 32736 / 3841) (Rhizobium leguminosarum bv. viciae).